Reading from the N-terminus, the 324-residue chain is Acetyl-coenzyme A carboxylase carboxyl transferase subunit beta (324 aa).

Positions 28–297 (LWCKCPSCNA…AVAPAAAKAP (270 aa)) constitute a CoA carboxyltransferase N-terminal domain. Zn(2+) is bound by residues cysteine 32, cysteine 35, cysteine 51, and cysteine 54. The C4-type zinc-finger motif lies at 32 to 54 (CPSCNAILYKSEVERNLEVCPKC).

It belongs to the AccD/PCCB family. Acetyl-CoA carboxylase is a heterohexamer composed of biotin carboxyl carrier protein (AccB), biotin carboxylase (AccC) and two subunits each of ACCase subunit alpha (AccA) and ACCase subunit beta (AccD). Zn(2+) is required as a cofactor.

The protein localises to the cytoplasm. It catalyses the reaction N(6)-carboxybiotinyl-L-lysyl-[protein] + acetyl-CoA = N(6)-biotinyl-L-lysyl-[protein] + malonyl-CoA. It functions in the pathway lipid metabolism; malonyl-CoA biosynthesis; malonyl-CoA from acetyl-CoA: step 1/1. Component of the acetyl coenzyme A carboxylase (ACC) complex. Biotin carboxylase (BC) catalyzes the carboxylation of biotin on its carrier protein (BCCP) and then the CO(2) group is transferred by the transcarboxylase to acetyl-CoA to form malonyl-CoA. This is Acetyl-coenzyme A carboxylase carboxyl transferase subunit beta from Methylococcus capsulatus (strain ATCC 33009 / NCIMB 11132 / Bath).